A 38-amino-acid polypeptide reads, in one-letter code: Large ribosomal subunit protein bL36 (38 aa).

This sequence belongs to the bacterial ribosomal protein bL36 family.

This chain is Large ribosomal subunit protein bL36, found in Pseudomonas entomophila (strain L48).